The following is a 292-amino-acid chain: Phosphotriesterase homology protein (292 aa).

Histidine 12, histidine 14, and glutamate 125 together coordinate Zn(2+). 148–149 provides a ligand contact to beta-D-glucose; the sequence is HN. Histidine 158 contributes to the Zn(2+) binding site. Residues glycine 176, aspartate 178, and arginine 181 each coordinate beta-D-glucose. Zn(2+) contacts are provided by histidine 186 and aspartate 243. Residues aspartate 280 and arginine 284 each contribute to the beta-D-glucose site.

The protein belongs to the metallo-dependent hydrolases superfamily. Phosphotriesterase family. As to quaternary structure, monomer. It depends on Zn(2+) as a cofactor.

Its activity is regulated as follows. Activity is higher in the enzyme containing Mn(2+) than that containing Zn(2+). Functionally, catalyzes the hydrolysis of phosphorylated glyceryl acetates in which the presence of a phosphate group is required for the enzymatic hydrolysis. Hydrolyzes a dibutyl glycerol derivative suggesting it acts on phosphoglycerol substrates with a butyrate leaving group. Also active with aromatic acetates and propionates. No activity with various sugar phosphates, with various nitrophenylphosphate or nitrophenylphosphonate derivatives, or with phosphorylated or non-phosphorylated sugar lactones tested. Does not hydrolyze non-phosphorylated carboxyesters with long chain leaving groups. No general esterase, aminopeptidase, sulfatase, phosphatase, carbonic anhydrase, phosphodiesterase, and phosphotriesterase activities detected when tested with the following non-specific substrates: p-nitrophenyl acetate, L-alanine nitroanilide, p-nitrophenyl sulfate, bis(p-nitrophenyl) phosphate, paraoxon, and p-nitrophenyl phosphate. The sequence is that of Phosphotriesterase homology protein from Escherichia coli (strain K12).